A 443-amino-acid polypeptide reads, in one-letter code: D-inositol 3-phosphate glycosyltransferase (443 aa).

Histidine 26 is a 1D-myo-inositol 3-phosphate binding site. Residues 32 to 33 and glycine 40 each bind UDP-N-acetyl-alpha-D-glucosamine; that span reads QP. Residues 37 to 42, lysine 95, tyrosine 128, threonine 152, and arginine 172 each bind 1D-myo-inositol 3-phosphate; that span reads DAGGMN. UDP-N-acetyl-alpha-D-glucosamine is bound by residues arginine 246, lysine 251, and glutamine 304. Residues tyrosine 313, arginine 314, and alanine 316 each coordinate Mg(2+). UDP-N-acetyl-alpha-D-glucosamine contacts are provided by glutamate 326 and glutamate 334. Threonine 340 provides a ligand contact to Mg(2+).

It belongs to the glycosyltransferase group 1 family. MshA subfamily. As to quaternary structure, homodimer.

It carries out the reaction 1D-myo-inositol 3-phosphate + UDP-N-acetyl-alpha-D-glucosamine = 1D-myo-inositol 2-acetamido-2-deoxy-alpha-D-glucopyranoside 3-phosphate + UDP + H(+). Its function is as follows. Catalyzes the transfer of a N-acetyl-glucosamine moiety to 1D-myo-inositol 3-phosphate to produce 1D-myo-inositol 2-acetamido-2-deoxy-glucopyranoside 3-phosphate in the mycothiol biosynthesis pathway. The sequence is that of D-inositol 3-phosphate glycosyltransferase from Mycobacteroides abscessus (strain ATCC 19977 / DSM 44196 / CCUG 20993 / CIP 104536 / JCM 13569 / NCTC 13031 / TMC 1543 / L948) (Mycobacterium abscessus).